A 293-amino-acid chain; its full sequence is 4-hydroxy-tetrahydrodipicolinate synthase (293 aa).

Thr-44 contacts pyruvate. The active-site Proton donor/acceptor is the Tyr-132. Catalysis depends on Lys-161, which acts as the Schiff-base intermediate with substrate. A pyruvate-binding site is contributed by Ile-205.

Belongs to the DapA family. In terms of assembly, homotetramer; dimer of dimers.

The protein localises to the cytoplasm. The catalysed reaction is L-aspartate 4-semialdehyde + pyruvate = (2S,4S)-4-hydroxy-2,3,4,5-tetrahydrodipicolinate + H2O + H(+). It functions in the pathway amino-acid biosynthesis; L-lysine biosynthesis via DAP pathway; (S)-tetrahydrodipicolinate from L-aspartate: step 3/4. Catalyzes the condensation of (S)-aspartate-beta-semialdehyde [(S)-ASA] and pyruvate to 4-hydroxy-tetrahydrodipicolinate (HTPA). The protein is 4-hydroxy-tetrahydrodipicolinate synthase of Thermosipho africanus (strain TCF52B).